The chain runs to 179 residues: Isopentenyl-diphosphate Delta-isomerase (179 aa).

His24 and His30 together coordinate Mn(2+). The Nudix hydrolase domain maps to 28–160; that stretch reads LLHRAFSIFI…PEKFTVWFLT (133 aa). Residue Cys65 is part of the active site. His67 contributes to the Mn(2+) binding site. Glu85 is a binding site for Mg(2+). Residues Glu110 and Glu112 each coordinate Mn(2+). Residue Glu112 is part of the active site.

This sequence belongs to the IPP isomerase type 1 family. As to quaternary structure, homodimer. Requires Mg(2+) as cofactor. Mn(2+) serves as cofactor.

Its subcellular location is the cytoplasm. It carries out the reaction isopentenyl diphosphate = dimethylallyl diphosphate. It participates in isoprenoid biosynthesis; dimethylallyl diphosphate biosynthesis; dimethylallyl diphosphate from isopentenyl diphosphate: step 1/1. In terms of biological role, catalyzes the 1,3-allylic rearrangement of the homoallylic substrate isopentenyl (IPP) to its highly electrophilic allylic isomer, dimethylallyl diphosphate (DMAPP). The polypeptide is Isopentenyl-diphosphate Delta-isomerase (Serratia proteamaculans (strain 568)).